Consider the following 529-residue polypeptide: Peptide chain release factor 3 (529 aa).

The 270-residue stretch at 11 to 280 folds into the tr-type G domain; the sequence is SKRRTFAIIS…SLIKWAPSPI (270 aa). GTP is bound by residues 20–27, 88–92, and 142–145; these read SHPDAGKT, DTPGH, and NKLD.

It belongs to the TRAFAC class translation factor GTPase superfamily. Classic translation factor GTPase family. PrfC subfamily.

The protein resides in the cytoplasm. Increases the formation of ribosomal termination complexes and stimulates activities of RF-1 and RF-2. It binds guanine nucleotides and has strong preference for UGA stop codons. It may interact directly with the ribosome. The stimulation of RF-1 and RF-2 is significantly reduced by GTP and GDP, but not by GMP. This chain is Peptide chain release factor 3, found in Buchnera aphidicola subsp. Schizaphis graminum (strain Sg).